The primary structure comprises 139 residues: ATP synthase epsilon chain (139 aa).

The protein belongs to the ATPase epsilon chain family. In terms of assembly, F-type ATPases have 2 components, CF(1) - the catalytic core - and CF(0) - the membrane proton channel. CF(1) has five subunits: alpha(3), beta(3), gamma(1), delta(1), epsilon(1). CF(0) has three main subunits: a, b and c.

It localises to the cell membrane. In terms of biological role, produces ATP from ADP in the presence of a proton gradient across the membrane. This Levilactobacillus brevis (strain ATCC 367 / BCRC 12310 / CIP 105137 / JCM 1170 / LMG 11437 / NCIMB 947 / NCTC 947) (Lactobacillus brevis) protein is ATP synthase epsilon chain.